We begin with the raw amino-acid sequence, 78 residues long: Large ribosomal subunit protein bL28 (78 aa).

It belongs to the bacterial ribosomal protein bL28 family.

In Edwardsiella ictaluri (strain 93-146), this protein is Large ribosomal subunit protein bL28.